A 424-amino-acid polypeptide reads, in one-letter code: FeMo cofactor biosynthesis protein NifB (424 aa).

The Radical SAM core domain maps to 12–261; sequence NDSSRHTYGR…PQMKHCARCR (250 aa). Positions 30, 34, and 37 each coordinate [4Fe-4S] cluster. S-adenosyl-L-methionine-binding residues include G84, T136, and V188. 2 residues coordinate [4Fe-4S] cluster: C257 and C260.

Belongs to the radical SAM superfamily. NifB family. As to quaternary structure, monomer. The cofactor is [4Fe-4S] cluster.

It functions in the pathway cofactor biosynthesis; Fe-Mo cofactor biosynthesis. Involved in the biosynthesis of the iron-molybdenum cofactor (FeMo-co or M-cluster) found in the dinitrogenase enzyme of the nitrogenase complex in nitrogen-fixing microorganisms. NifB catalyzes the crucial step of radical SAM-dependent carbide insertion that occurs concomitant with the insertion of a 9th sulfur and the rearrangement/coupling of two [4Fe-4S] clusters into a [8Fe-9S-C] cluster, the precursor to the M-cluster. The chain is FeMo cofactor biosynthesis protein NifB from Chlorobaculum tepidum (strain ATCC 49652 / DSM 12025 / NBRC 103806 / TLS) (Chlorobium tepidum).